Reading from the N-terminus, the 106-residue chain is Integration host factor subunit beta (106 aa).

The tract at residues 57-106 (PARAGRNPRTGEHVPVEQKSVPFFKTGKEMRERLNRDGLDGATPPSPPAA) is disordered. The span at 82–95 (TGKEMRERLNRDGL) shows a compositional bias: basic and acidic residues.

Belongs to the bacterial histone-like protein family. As to quaternary structure, heterodimer of an alpha and a beta chain.

In terms of biological role, this protein is one of the two subunits of integration host factor, a specific DNA-binding protein that functions in genetic recombination as well as in transcriptional and translational control. The sequence is that of Integration host factor subunit beta from Afipia carboxidovorans (strain ATCC 49405 / DSM 1227 / KCTC 32145 / OM5) (Oligotropha carboxidovorans).